We begin with the raw amino-acid sequence, 548 residues long: MAEQQTTELTNIDLEAGSEWRFELEADENIALRTLSSDPVFINSQELTPSAWYPIYRHTKSALYAPTSARIQVTNLPASHYTSTSTVQPQLLNLHLAMERQRILSKRGMEQRGPRVMIMGPQSSGKTTVMKNLVNLALGTGMGWTPGAIGLDPSSPPNLIPGSLSISTPSHPIPTHHLAHPLGSPPASTAANTISGDVETASWWLGALEPTNKNAEVWRVLVEHMAEAWGMRCEKDKIANISGLFLDTPAAFTVPTLGTKKDDPKARYTLVSHAIQAFDIDTIIVIGHEKLHIDLSRLPLVQSRQLNVIRIPKSGGAVDLDDHDRETAHIFQVRTYFYGEPPLPPQISSLVGKMVSLDFELSPYSFQIPWSRLVVLRVGEENSAPSSALPLGSSKILSPLRLTRVDPSGPGHVVRLLNRVLALVDVKPEDRIVPAKESEVKEEVKEEKNEKDGEIKQDGEGEKKGEGKGEGEGEGEGKYGEEEGEAEGEDDEEEVPFREEIGTREVMGFIVITAIDTFARKYTVLSPTPGRLPTTVAIAGAIEWVDSA.

ATP is bound by residues glutamate 19, lysine 60, and 123-128; that span reads SSGKTT. The span at 437–481 shows a compositional bias: basic and acidic residues; it reads ESEVKEEVKEEKNEKDGEIKQDGEGEKKGEGKGEGEGEGEGKYGE. The tract at residues 437–500 is disordered; the sequence is ESEVKEEVKE…DEEEVPFREE (64 aa). Residues 482 to 494 are compositionally biased toward acidic residues; sequence EEGEAEGEDDEEE.

It belongs to the Clp1 family. Clp1 subfamily. Component of a pre-mRNA cleavage factor complex. Interacts directly with PCF11.

Its subcellular location is the nucleus. Its function is as follows. Required for endonucleolytic cleavage during polyadenylation-dependent pre-mRNA 3'-end formation. The polypeptide is mRNA cleavage and polyadenylation factor CLP1 (Cryptococcus neoformans var. neoformans serotype D (strain B-3501A) (Filobasidiella neoformans)).